Reading from the N-terminus, the 194-residue chain is Prefoldin subunit 3 (194 aa).

The protein belongs to the prefoldin subunit alpha family. In terms of assembly, heterohexamer of two PFD-alpha type and four PFD-beta type subunits. Interacts with itself. Interacts with Vhl and betaTub56D/tubulin beta-1 chain. Interacts with tubulin alpha-beta heterodimers by itself or in complex with Vhl. Does not interact with microtubules (MTs). Expressed in larval central nervous system (CNS) and pupal testis (at protein level).

It is found in the cytoplasm. In terms of biological role, binds specifically to cytosolic chaperonin (c-CPN) and transfers target proteins to it. Binds to nascent polypeptide chain and promotes folding in an environment in which there are many competing pathways for nonnative proteins. Required for tubulin stability and spindle and centrosome formation in cooperation with Vhl. In Drosophila melanogaster (Fruit fly), this protein is Prefoldin subunit 3 (mgr).